We begin with the raw amino-acid sequence, 332 residues long: Adenosine deaminase (332 aa).

2 residues coordinate Zn(2+): His-12 and His-14. Positions 14, 16, and 170 each coordinate substrate. His-197 is a binding site for Zn(2+). Glu-200 acts as the Proton donor in catalysis. A Zn(2+)-binding site is contributed by Asp-278. Asp-279 contributes to the substrate binding site.

Belongs to the metallo-dependent hydrolases superfamily. Adenosine and AMP deaminases family. Adenosine deaminase subfamily. Zn(2+) serves as cofactor.

The enzyme catalyses adenosine + H2O + H(+) = inosine + NH4(+). It catalyses the reaction 2'-deoxyadenosine + H2O + H(+) = 2'-deoxyinosine + NH4(+). In terms of biological role, catalyzes the hydrolytic deamination of adenosine and 2-deoxyadenosine. This Yersinia enterocolitica serotype O:8 / biotype 1B (strain NCTC 13174 / 8081) protein is Adenosine deaminase.